The chain runs to 357 residues: tRNA/tmRNA (uracil-C(5))-methyltransferase (357 aa).

Positions 185, 212, 217, 233, and 291 each coordinate S-adenosyl-L-methionine. The active-site Nucleophile is the C316. E350 (proton acceptor) is an active-site residue.

Belongs to the class I-like SAM-binding methyltransferase superfamily. RNA M5U methyltransferase family. TrmA subfamily.

The catalysed reaction is uridine(54) in tRNA + S-adenosyl-L-methionine = 5-methyluridine(54) in tRNA + S-adenosyl-L-homocysteine + H(+). The enzyme catalyses uridine(341) in tmRNA + S-adenosyl-L-methionine = 5-methyluridine(341) in tmRNA + S-adenosyl-L-homocysteine + H(+). In terms of biological role, dual-specificity methyltransferase that catalyzes the formation of 5-methyluridine at position 54 (m5U54) in all tRNAs, and that of position 341 (m5U341) in tmRNA (transfer-mRNA). The sequence is that of tRNA/tmRNA (uracil-C(5))-methyltransferase from Campylobacter hominis (strain ATCC BAA-381 / DSM 21671 / CCUG 45161 / LMG 19568 / NCTC 13146 / CH001A).